The sequence spans 131 residues: Small ribosomal subunit protein uS8 (131 aa).

This sequence belongs to the universal ribosomal protein uS8 family. In terms of assembly, part of the 30S ribosomal subunit. Contacts proteins S5 and S12.

Functionally, one of the primary rRNA binding proteins, it binds directly to 16S rRNA central domain where it helps coordinate assembly of the platform of the 30S subunit. In Acholeplasma laidlawii (strain PG-8A), this protein is Small ribosomal subunit protein uS8.